A 216-amino-acid polypeptide reads, in one-letter code: Probable succinyl-CoA:3-ketoacid coenzyme A transferase subunit B (216 aa).

E47 is an active-site residue.

The protein belongs to the 3-oxoacid CoA-transferase subunit B family. Heterodimer of a subunit A and a subunit B.

It catalyses the reaction a 3-oxo acid + succinyl-CoA = a 3-oxoacyl-CoA + succinate. The polypeptide is Probable succinyl-CoA:3-ketoacid coenzyme A transferase subunit B (scoB) (Bacillus subtilis (strain 168)).